Here is a 488-residue protein sequence, read N- to C-terminus: WD repeat-containing protein slp1 (488 aa).

Disordered stretches follow at residues 1 to 29 and 74 to 93; these read MEIA…PNSP and CGSP…FIPS. Residues 7–17 are compositionally biased toward low complexity; sequence SSTISPTFSTP. WD repeat units lie at residues 178–215, 219–258, 261–298, 302–341, 344–386, 388–429, and 434–473; these read IDDY…VSAL, DEST…KLRT, GHQA…HQIG, GHSS…PKFT, NHNA…RVNT, DAGS…LTKQ, and AHDT…HVKR.

It belongs to the WD repeat CDC20/Fizzy family. Interacts with cdc13, mad3 and mes1.

Its function is as follows. Required for mad2-dependent spindle checkpoint activation. Promotes ubiquitin-dependent degradation of cdc13 by the anaphase promoting complex/cyclosome (APC/C). The protein is WD repeat-containing protein slp1 (slp1) of Schizosaccharomyces pombe (strain 972 / ATCC 24843) (Fission yeast).